The sequence spans 114 residues: Large ribosomal subunit protein bL19 (114 aa).

This sequence belongs to the bacterial ribosomal protein bL19 family.

This protein is located at the 30S-50S ribosomal subunit interface and may play a role in the structure and function of the aminoacyl-tRNA binding site. This is Large ribosomal subunit protein bL19 from Desulfatibacillum aliphaticivorans.